The primary structure comprises 186 residues: UPF0340 protein SZO_02480 (186 aa).

Belongs to the UPF0340 family.

The sequence is that of UPF0340 protein SZO_02480 from Streptococcus equi subsp. zooepidemicus (strain H70).